The sequence spans 388 residues: F-box protein ETP2 (388 aa).

One can recognise an F-box domain in the interval 2–48 (KTIQEQLPNDLVEEILCRVPATSLRRLRSTCKAWNRLFKGDRILASK).

Interacts with EIN2 (via C-terminus).

In terms of biological role, negative regulator of EIN2 protein stability. This is F-box protein ETP2 from Arabidopsis thaliana (Mouse-ear cress).